The following is a 94-amino-acid chain: Integration host factor subunit beta (94 aa).

This sequence belongs to the bacterial histone-like protein family. As to quaternary structure, heterodimer of an alpha and a beta chain.

In terms of biological role, this protein is one of the two subunits of integration host factor, a specific DNA-binding protein that functions in genetic recombination as well as in transcriptional and translational control. The sequence is that of Integration host factor subunit beta (ihfB) from Serratia marcescens.